We begin with the raw amino-acid sequence, 128 residues long: SSSEDKVTVNFINRDGETLTTKGKVGDSLLDVVVENNLDIDGFGACEGTLACSTCHLIFEQHIYEKLEAITDEENDMLDLAYGLTDRSRLGCQICLTKAMDNMTVRVPDAVSDARESIDMGMNSSKIE.

Ser3 carries the phosphoserine modification. Lys6 is subject to N6-acetyllysine; alternate. Residue Lys6 is modified to N6-succinyllysine; alternate. Residues 7 to 111 (VTVNFINRDG…NMTVRVPDAV (105 aa)) enclose the 2Fe-2S ferredoxin-type domain. Residues Cys46, Cys52, Cys55, and Cys92 each contribute to the [2Fe-2S] cluster site. An N6-succinyllysine modification is found at Lys98. Ser117 is subject to Phosphoserine.

The protein belongs to the adrenodoxin/putidaredoxin family. As to quaternary structure, interacts with CYP11A1. [2Fe-2S] cluster serves as cofactor.

The protein resides in the mitochondrion matrix. Essential for the synthesis of various steroid hormones. Participates in the reduction of mitochondrial cytochrome P450 for steroidogenesis. Transfers electrons from adrenodoxin reductase to CYP11A1, a cytochrome P450 that catalyzes cholesterol side-chain cleavage. Does not form a ternary complex with adrenodoxin reductase and CYP11A1 but shuttles between the two enzymes to transfer electrons. The protein is Adrenodoxin (FDX1) of Ovis aries (Sheep).